Consider the following 193-residue polypeptide: Recombination protein RecR (193 aa).

A C4-type zinc finger spans residues 61–76 (CASCNALSESEICEIC). One can recognise a Toprim domain in the interval 84–170 (SQLCMVLHPR…TFTKIAQGVP (87 aa)).

The protein belongs to the RecR family.

Functionally, may play a role in DNA repair. It seems to be involved in an RecBC-independent recombinational process of DNA repair. It may act with RecF and RecO. The protein is Recombination protein RecR of Helicobacter pylori (strain Shi470).